The primary structure comprises 171 residues: UPF0763 protein Hac_0849 (171 aa).

The protein belongs to the UPF0763 family.

The protein is UPF0763 protein Hac_0849 of Helicobacter acinonychis (strain Sheeba).